A 97-amino-acid polypeptide reads, in one-letter code: Aspartyl/glutamyl-tRNA(Asn/Gln) amidotransferase subunit C (97 aa).

The protein belongs to the GatC family. In terms of assembly, heterotrimer of A, B and C subunits.

The enzyme catalyses L-glutamyl-tRNA(Gln) + L-glutamine + ATP + H2O = L-glutaminyl-tRNA(Gln) + L-glutamate + ADP + phosphate + H(+). It catalyses the reaction L-aspartyl-tRNA(Asn) + L-glutamine + ATP + H2O = L-asparaginyl-tRNA(Asn) + L-glutamate + ADP + phosphate + 2 H(+). In terms of biological role, allows the formation of correctly charged Asn-tRNA(Asn) or Gln-tRNA(Gln) through the transamidation of misacylated Asp-tRNA(Asn) or Glu-tRNA(Gln) in organisms which lack either or both of asparaginyl-tRNA or glutaminyl-tRNA synthetases. The reaction takes place in the presence of glutamine and ATP through an activated phospho-Asp-tRNA(Asn) or phospho-Glu-tRNA(Gln). The polypeptide is Aspartyl/glutamyl-tRNA(Asn/Gln) amidotransferase subunit C (Cyanothece sp. (strain PCC 7425 / ATCC 29141)).